Consider the following 93-residue polypeptide: UPF0358 protein lin1058 (93 aa).

This sequence belongs to the UPF0358 family.

This Listeria innocua serovar 6a (strain ATCC BAA-680 / CLIP 11262) protein is UPF0358 protein lin1058.